A 246-amino-acid chain; its full sequence is Glandular kallikrein (246 aa).

Positions alanine 1–arginine 7 are excised as a propeptide. In terms of domain architecture, Peptidase S1 spans isoleucine 8–threonine 243. 5 disulfide bridges follow: cysteine 14–cysteine 158, cysteine 33–cysteine 49, cysteine 135–cysteine 204, cysteine 169–cysteine 183, and cysteine 194–cysteine 219. Residue histidine 48 is the Charge relay system of the active site. The N-linked (GlcNAc...) asparagine glycan is linked to asparagine 85. Residues asparagine 85 to leucine 104 form a kallikrein (autolysis) loop region. The Charge relay system role is filled by aspartate 103. The active-site Charge relay system is the serine 198. Residue asparagine 239 is glycosylated (N-linked (GlcNAc...) asparagine).

It belongs to the peptidase S1 family. Kallikrein subfamily. In terms of assembly, monomer.

The catalysed reaction is Preferential cleavage of Arg-|-Xaa bonds in small molecule substrates. Highly selective action to release kallidin (lysyl-bradykinin) from kininogen involves hydrolysis of Met-|-Xaa or Leu-|-Xaa.. Functionally, glandular kallikreins cleave Met-Lys and Arg-Ser bonds in kininogen to release Lys-bradykinin. In Sus scrofa (Pig), this protein is Glandular kallikrein.